A 1348-amino-acid polypeptide reads, in one-letter code: Vascular endothelial growth factor receptor 2 (1348 aa).

The first 20 residues, 1–20, serve as a signal peptide directing secretion; the sequence is MELGPLRVLTVLLCLAPVFA. Over 21–756 the chain is Extracellular; the sequence is GLFISMDQPT…GAEEKTNLEL (736 aa). 20 N-linked (GlcNAc...) asparagine glycosylation sites follow: Asn-43, Asn-47, Asn-63, Asn-93, Asn-138, Asn-153, Asn-201, Asn-240, Asn-290, Asn-310, Asn-365, Asn-386, Asn-513, Asn-556, Asn-603, Asn-613, Asn-622, Asn-666, Asn-688, and Asn-710. Ig-like C2-type domains are found at residues 43–106, 138–202, 220–312, 320–405, 412–534, 540–651, and 658–744; these read NDTL…GDSQ, NKTV…IDNE, DLTM…KNSS, PFIH…HTFT, PQIG…RVIS, GLEI…KHLT, and PRLV…AFFS. A disulfide bridge connects residues Cys-50 and Cys-100. Cys-145 and Cys-195 form a disulfide bridge. The cysteines at positions 241 and 299 are disulfide-linked. Cys-436 and Cys-520 are disulfide-bonded. Cys-561 and Cys-633 are oxidised to a cystine. Cys-679 and Cys-728 are joined by a disulfide. Residues 757 to 777 form a helical membrane-spanning segment; it reads IILVGTAVIAMFFWLLLVIIL. The Cytoplasmic portion of the chain corresponds to 778–1348; sequence RTVKRANGGD…SPAPVASLPL (571 aa). Positions 825-1155 constitute a Protein kinase domain; it reads LKLGKPLGRG…FSELVEHLGN (331 aa). Residues 831–839 and Lys-859 each bind ATP; that span reads LGRGAFGQV. The segment covering 958–967 has biased composition (low complexity); it reads ITSSQSSTSS. Residues 958–983 are disordered; that stretch reads ITSSQSSTSSGFVEERSLSDVEEEDA. The active-site Proton acceptor is the Asp-1021. A phosphotyrosine; by autocatalysis mark is found at Tyr-1047, Tyr-1052, Tyr-1168, and Tyr-1207. A disordered region spans residues 1280 to 1302; it reads PSKSNESVMSEASNQTSGYQSGY.

It belongs to the protein kinase superfamily. Tyr protein kinase family. CSF-1/PDGF receptor subfamily. Post-translationally, autophosphorylated on tyrosine residues upon ligand binding. Autophosphorylation occurs in trans, i.e. one subunit of the dimeric receptor phosphorylates tyrosine residues on the other subunit. In all endothelial tissues during onset of vascularization. In later development, present in lung, heart, intestine and skin.

The protein localises to the cell membrane. It is found in the cytoplasmic vesicle. The protein resides in the early endosome. It localises to the cell junction. Its subcellular location is the endoplasmic reticulum. The catalysed reaction is L-tyrosyl-[protein] + ATP = O-phospho-L-tyrosyl-[protein] + ADP + H(+). Its activity is regulated as follows. Present in an inactive conformation in the absence of bound ligand. Binding of VEGFA, VEGFC or VEGFD leads to dimerization and activation by autophosphorylation on tyrosine residues. Tyrosine-protein kinase that acts as a cell-surface receptor for VEGFA, VEGFC and/or VEGFD and plays an essential role in the regulation of angiogenesis and vascular development. Promotes proliferation, survival, migration and differentiation of endothelial cells. Promotes reorganization of the actin cytoskeleton. Binding of vascular growth factors leads to the activation of several signaling cascades. Activation of PLCG1 leads to the production of the cellular signaling molecules diacylglycerol and inositol 1,4,5-trisphosphate and the activation of protein kinase C. Mediates activation of MAPK1/ERK2, MAPK3/ERK1 and the MAP kinase signaling pathway, as well as of the AKT1 signaling pathway. Mediates phosphorylation of PIK3R1, the regulatory subunit of phosphatidylinositol 3-kinase, reorganization of the actin cytoskeleton and activation of PTK2/FAK1. Required for VEGFA-mediated induction of NOS2 and NOS3, leading to the production of the signaling molecule nitric oxide (NO) by endothelial cells. The protein is Vascular endothelial growth factor receptor 2 of Coturnix japonica (Japanese quail).